The following is a 421-amino-acid chain: Alpha-1-antiproteinase 2 (421 aa).

The signal sequence occupies residues 1–24; it reads MPSSVPWCLLLLAGLCCLVPSSLA. N-linked (GlcNAc...) asparagine glycosylation is found at Asn-73, Asn-110, and Asn-274. The segment at 376 to 395 is RCL; it reads GTTMWEIMPISLPPDLKFNR.

The protein belongs to the serpin family. N-glycosylated with carbohydrates having biantennary side chains. As to expression, plasma.

It is found in the secreted. Functionally, inhibitor of serine proteases. The chain is Alpha-1-antiproteinase 2 from Equus caballus (Horse).